We begin with the raw amino-acid sequence, 160 residues long: SsrA-binding protein (160 aa).

It belongs to the SmpB family.

The protein localises to the cytoplasm. Required for rescue of stalled ribosomes mediated by trans-translation. Binds to transfer-messenger RNA (tmRNA), required for stable association of tmRNA with ribosomes. tmRNA and SmpB together mimic tRNA shape, replacing the anticodon stem-loop with SmpB. tmRNA is encoded by the ssrA gene; the 2 termini fold to resemble tRNA(Ala) and it encodes a 'tag peptide', a short internal open reading frame. During trans-translation Ala-aminoacylated tmRNA acts like a tRNA, entering the A-site of stalled ribosomes, displacing the stalled mRNA. The ribosome then switches to translate the ORF on the tmRNA; the nascent peptide is terminated with the 'tag peptide' encoded by the tmRNA and targeted for degradation. The ribosome is freed to recommence translation, which seems to be the essential function of trans-translation. This chain is SsrA-binding protein, found in Mycobacterium bovis (strain ATCC BAA-935 / AF2122/97).